The chain runs to 750 residues: MIIRSPEPEVKILVDRDPVKTSFEEWAKPGHFSRTIAKGPETTTWIWNLHADAHDFDSHTSDLEEISRKVFSAHFGQLSIIFLWLSGMYFHGARFSNYEAWLSDPTHIGPSAQVVWPIVGQEILNGDVGGGFRGIQITSGFFQLWRASGITSELQLYCTAIGALIFAALMLFAGWFHYHKAAPKLAWFQDVESMLNHHLAGLLGLGSLSWAGHQVHVSLPINQFLNAGVDPKEIPLPHEFILNRDLLAQLYPSFSEGATPFFTLNWSKYAEFLTFRGGLDPVTGGLWLTDIAHHHLAIAILFLIAGHMYRTNWGIGHGLKDILEAHKGPFTGQGHKGLYEILTTSWHAQLSLNLAMLGSLTIIVAHHMYSMPPYPYLATDYGTQLSLFTHHMWIGGFLIVGAAAHAAIFMVRDYDPTTRYNDLLDRVLRHRDAIISHLNWVCIFLGFHSFGLYIHNDTMSALGRPQDMFSDTAIQLQPVFAQWIQNTHALAPGGTAPGATASTSLTWGGVDLVAVGGKVALLPIPLGTADFLVHHIHAFTIHVTVLILLKGVLFARSSRLIPDKANLGFRFPCDGPGRGGTCQVSAWDHVFLGLFWMYNAISVVIFHFSWKMQSDVWGSISDQGVVTHITGGNFAQSSITINGWLRDFLWAQASQVIQSYGSSLSAYGLFFLGAHFVWAFSLMFLFSGRGYWQELIESIVWAHNKLKVAPATQPRALSIVQGRAVGVTHYLLGGIATTWAFFLARIIAVG.

8 helical membrane passes run 70–93, 156–179, 195–219, 291–309, 346–369, 385–411, 433–455, and 531–549; these read VFSAHFGQLSIIFLWLSGMYFHGA, LYCTAIGALIFAALMLFAGWFHYH, LNHHLAGLLGLGSLSWAGHQVHVSL, IAHHHLAIAILFLIAGHMY, WHAQLSLNLAMLGSLTIIVAHHMY, LSLFTHHMWIGGFLIVGAAAHAAIFMV, AIISHLNWVCIFLGFHSFGLYIH, and FLVHHIHAFTIHVTVLILL. [4Fe-4S] cluster is bound by residues cysteine 573 and cysteine 582. 2 consecutive transmembrane segments (helical) span residues 589–610 and 664–686; these read HVFLGLFWMYNAISVVIFHFSW and LSAYGLFFLGAHFVWAFSLMFLF. Histidine 675 is a chlorophyll a' binding site. Chlorophyll a-binding residues include methionine 683 and tyrosine 691. Tryptophan 692 lines the phylloquinone pocket. Residues 724–744 traverse the membrane as a helical segment; it reads AVGVTHYLLGGIATTWAFFLA.

The protein belongs to the PsaA/PsaB family. The PsaA/B heterodimer binds the P700 chlorophyll special pair and subsequent electron acceptors. PSI consists of a core antenna complex that captures photons, and an electron transfer chain that converts photonic excitation into a charge separation. The eukaryotic PSI reaction center is composed of at least 11 subunits. P700 is a chlorophyll a/chlorophyll a' dimer, A0 is one or more chlorophyll a, A1 is one or both phylloquinones and FX is a shared 4Fe-4S iron-sulfur center. serves as cofactor.

Its subcellular location is the plastid. It localises to the chloroplast thylakoid membrane. The catalysed reaction is reduced [plastocyanin] + hnu + oxidized [2Fe-2S]-[ferredoxin] = oxidized [plastocyanin] + reduced [2Fe-2S]-[ferredoxin]. In terms of biological role, psaA and PsaB bind P700, the primary electron donor of photosystem I (PSI), as well as the electron acceptors A0, A1 and FX. PSI is a plastocyanin-ferredoxin oxidoreductase, converting photonic excitation into a charge separation, which transfers an electron from the donor P700 chlorophyll pair to the spectroscopically characterized acceptors A0, A1, FX, FA and FB in turn. Oxidized P700 is reduced on the lumenal side of the thylakoid membrane by plastocyanin. The sequence is that of Photosystem I P700 chlorophyll a apoprotein A1 from Citrus sinensis (Sweet orange).